Reading from the N-terminus, the 346-residue chain is MEDLQLVLFVLGAIAIVAVLVHGFWSIRRQQPKSLKDSPMGNFYKKQAERGEGAPKRVDADGFDADGIGAVRVRKANEAHTPEAPAFNPYLKQEAKTQPQPVEPVQVEPKPLFEQEPSMAQPDFSLQSPTAKEQHRGPKASRQEPVLQGHSANLAQAHVGQSHAAMVAQKVAEEQRAQVQMPTQTALFDDEEPYEEEQSQAVEQADDDLGEPRDVLVLHVVAKEGQQLNGAELLPCFLTLNFKYGDMNIFHRHVDNAGNGKVLFSIANMVKPGVFDPDNMEQFSTQGVVFFMTLPCYGDALMNFSIMLNSARQLADDIDAVVLDGQRQPWGEFTKQDYLHRIRANA.

At 1-6 (MEDLQL) the chain is on the periplasmic side. A helical transmembrane segment spans residues 7 to 27 (VLFVLGAIAIVAVLVHGFWSI). Topologically, residues 28–346 (RRQQPKSLKD…DYLHRIRANA (319 aa)) are cytoplasmic. Disordered regions lie at residues 76 to 103 (ANEAHTPEAPAFNPYLKQEAKTQPQPVE) and 121 to 145 (QPDFSLQSPTAKEQHRGPKASRQEP).

The protein belongs to the ZipA family. As to quaternary structure, interacts with FtsZ via their C-terminal domains.

The protein resides in the cell inner membrane. Essential cell division protein that stabilizes the FtsZ protofilaments by cross-linking them and that serves as a cytoplasmic membrane anchor for the Z ring. Also required for the recruitment to the septal ring of downstream cell division proteins. This chain is Cell division protein ZipA, found in Shewanella sp. (strain MR-4).